The following is a 427-amino-acid chain: Ribosomal protein uS12 methylthiotransferase RimO (427 aa).

One can recognise an MTTase N-terminal domain in the interval 1–116; the sequence is MNFYVEVLGC…IATHIGKRNV (116 aa). Residues Cys10, Cys46, Cys79, Cys145, Cys149, and Cys152 each coordinate [4Fe-4S] cluster. A Radical SAM core domain is found at 131 to 360; it reads VDNGQYAYVK…MDIQSQISFE (230 aa). Positions 363 to 426 constitute a TRAM domain; it reads EKLVGKKLKV…IYDLEGEIVE (64 aa).

Belongs to the methylthiotransferase family. RimO subfamily. The cofactor is [4Fe-4S] cluster.

The protein resides in the cytoplasm. The catalysed reaction is L-aspartate(89)-[ribosomal protein uS12]-hydrogen + (sulfur carrier)-SH + AH2 + 2 S-adenosyl-L-methionine = 3-methylsulfanyl-L-aspartate(89)-[ribosomal protein uS12]-hydrogen + (sulfur carrier)-H + 5'-deoxyadenosine + L-methionine + A + S-adenosyl-L-homocysteine + 2 H(+). Its function is as follows. Catalyzes the methylthiolation of an aspartic acid residue of ribosomal protein uS12. The chain is Ribosomal protein uS12 methylthiotransferase RimO from Thermosipho melanesiensis (strain DSM 12029 / CIP 104789 / BI429).